We begin with the raw amino-acid sequence, 172 residues long: Large ribosomal subunit protein uL10 (172 aa).

It belongs to the universal ribosomal protein uL10 family. As to quaternary structure, part of the ribosomal stalk of the 50S ribosomal subunit. The N-terminus interacts with L11 and the large rRNA to form the base of the stalk. The C-terminus forms an elongated spine to which L12 dimers bind in a sequential fashion forming a multimeric L10(L12)X complex.

Functionally, forms part of the ribosomal stalk, playing a central role in the interaction of the ribosome with GTP-bound translation factors. The chain is Large ribosomal subunit protein uL10 from Afipia carboxidovorans (strain ATCC 49405 / DSM 1227 / KCTC 32145 / OM5) (Oligotropha carboxidovorans).